Here is a 782-residue protein sequence, read N- to C-terminus: Formin-like protein 9 (782 aa).

Positions 1–24 (MQNFWFAIFFFLLTCAPPSPLSYA) are cleaved as a signal peptide. Residues 102–122 (LLLPALSAVLVIATVIGLALF) form a helical membrane-spanning segment. Disordered regions lie at residues 191-223 (DSPE…EEEE), 264-287 (MSPP…RLRV), and 387-407 (SSSQ…PPLV). Residues 214–223 (EVNEEDEEEE) are compositionally biased toward acidic residues. Pro residues predominate over residues 396-407 (ALPPPTRPPPLV). The FH2 domain maps to 406-782 (LVPPSQPFVV…LDQVCKEMGD (377 aa)).

Belongs to the formin-like family. Class-I subfamily.

The protein resides in the membrane. In terms of biological role, might be involved in the organization and polarity of the actin cytoskeleton. In Arabidopsis thaliana (Mouse-ear cress), this protein is Formin-like protein 9 (FH9).